Consider the following 1026-residue polypeptide: Exportin-T (1026 aa).

Belongs to the exportin family.

It localises to the nucleus. Its subcellular location is the cytoplasm. TRNA nucleus export receptor which facilitates tRNA translocation across the nuclear pore complex. Involved in pre-tRNA splicing, probably by affecting the interaction of pre-tRNA with splicing endonuclease. The sequence is that of Exportin-T (los1) from Neurospora crassa (strain ATCC 24698 / 74-OR23-1A / CBS 708.71 / DSM 1257 / FGSC 987).